Here is a 603-residue protein sequence, read N- to C-terminus: Glutathione-regulated potassium-efflux system protein KefB (603 aa).

13 helical membrane-spanning segments follow: residues 5–25 (ALLT…PIAA), 29–49 (IGAV…GLGF), 53–73 (VEAI…IIGL), 87–107 (IFGV…GALY), 115–135 (SALI…LQLM), 152–172 (VLLF…ILAG), 180–202 (WERI…YLVR), 207–227 (FIAA…LVLG), 230–250 (LFME…GILL), 268–288 (GLLL…GILY), 291–311 (IVKI…VLYF), 326–346 (FAGV…AAAS), and 356–376 (PLLL…MQVI). The RCK N-terminal domain maps to 400-521 (EPQVIVVGFG…VRHFSRETFS (122 aa)).

This sequence belongs to the monovalent cation:proton antiporter 2 (CPA2) transporter (TC 2.A.37) family. KefB subfamily. Interacts with the regulatory subunit KefG.

The protein resides in the cell inner membrane. Functionally, pore-forming subunit of a potassium efflux system that confers protection against electrophiles. Catalyzes K(+)/H(+) antiport. This Pectobacterium atrosepticum (strain SCRI 1043 / ATCC BAA-672) (Erwinia carotovora subsp. atroseptica) protein is Glutathione-regulated potassium-efflux system protein KefB.